Reading from the N-terminus, the 345-residue chain is Methylthioribose-1-phosphate isomerase (345 aa).

Residues 44–46 (RGA), Arg86, and Gln194 contribute to the substrate site. The active-site Proton donor is Asp235. Substrate is bound at residue 245 to 246 (NK).

It belongs to the eIF-2B alpha/beta/delta subunits family. MtnA subfamily.

The catalysed reaction is 5-(methylsulfanyl)-alpha-D-ribose 1-phosphate = 5-(methylsulfanyl)-D-ribulose 1-phosphate. It functions in the pathway amino-acid biosynthesis; L-methionine biosynthesis via salvage pathway; L-methionine from S-methyl-5-thio-alpha-D-ribose 1-phosphate: step 1/6. In terms of biological role, catalyzes the interconversion of methylthioribose-1-phosphate (MTR-1-P) into methylthioribulose-1-phosphate (MTRu-1-P). This Desulfitobacterium hafniense (strain DSM 10664 / DCB-2) protein is Methylthioribose-1-phosphate isomerase.